The primary structure comprises 799 residues: Lon protease (799 aa).

Residues 7 to 200 form the Lon N-terminal domain; sequence LPVLPLRDIV…KVFALMEGEI (194 aa). 352–359 contributes to the ATP binding site; it reads GPPGVGKT. A Lon proteolytic domain is found at 587 to 768; that stretch reads VDQVGIVTGL…DEVLKHALTG (182 aa). Active-site residues include Ser674 and Lys717. Residues 772 to 799 are disordered; the sequence is PVEWNEAEEPITTSAKKDDGDSDAMLTH.

It belongs to the peptidase S16 family. Homohexamer. Organized in a ring with a central cavity.

Its subcellular location is the cytoplasm. The enzyme catalyses Hydrolysis of proteins in presence of ATP.. In terms of biological role, ATP-dependent serine protease that mediates the selective degradation of mutant and abnormal proteins as well as certain short-lived regulatory proteins. Required for cellular homeostasis and for survival from DNA damage and developmental changes induced by stress. Degrades polypeptides processively to yield small peptide fragments that are 5 to 10 amino acids long. Binds to DNA in a double-stranded, site-specific manner. CcrM is an important target of the Lon protease pathway in C.crescentus. This chain is Lon protease, found in Caulobacter vibrioides (strain ATCC 19089 / CIP 103742 / CB 15) (Caulobacter crescentus).